Here is a 117-residue protein sequence, read N- to C-terminus: MPRPYKCRRISEIPKVAYYKPAGIPLSMLEENQLSTEEAEALRLKDLLGLEQAQAALQMNISRPTFQRMLYSARYKVADALLNGKALRIEGGVFEIDARPCCQRQTPPCQPDPPEQT.

The protein belongs to the UPF0251 family.

This is UPF0251 protein cbdbA217 from Dehalococcoides mccartyi (strain CBDB1).